A 193-amino-acid polypeptide reads, in one-letter code: ATP-dependent protease subunit HslV (193 aa).

Residue Thr12 is part of the active site. The Na(+) site is built by Ala167, Cys170, and Thr173.

Belongs to the peptidase T1B family. HslV subfamily. In terms of assembly, a double ring-shaped homohexamer of HslV is capped on each side by a ring-shaped HslU homohexamer. The assembly of the HslU/HslV complex is dependent on binding of ATP.

It is found in the cytoplasm. It catalyses the reaction ATP-dependent cleavage of peptide bonds with broad specificity.. Its activity is regulated as follows. Allosterically activated by HslU binding. In terms of biological role, protease subunit of a proteasome-like degradation complex believed to be a general protein degrading machinery. The protein is ATP-dependent protease subunit HslV of Bartonella henselae (strain ATCC 49882 / DSM 28221 / CCUG 30454 / Houston 1) (Rochalimaea henselae).